A 1252-amino-acid chain; its full sequence is MSETNTTDAKTVPAEAEKKKEQSLPFFKLFSFADKFDYLLMFVGSLGAIVHGSSMPVFFLLFGQMVNGFGKNQMDLHQMVHEVSRYSLYFVYLGLVVCFSSYAEIACWMYSGERQVAALRKKYLEAVLKQDVGFFDTDARTGDIVFSVSTDTLLVQDAISEKVGNFIHYLSTFLAGLVVGFVSAWKLALLSVAVIPGIAFAGGLYAYTLTGITSKSRESYANAGVIAEQAIAQVRTVYSYVGESKALNAYSDAIQYTLKLGYKAGMAKGLGLGCTYGIACMSWALVFWYAGVFIRNGQTDGGKAFTAIFSAIVGGMSLGQSFSNLGAFSKGKAAGYKLMEIINQRPTIIQDPLDGKCLDQVHGNIEFKDVTFSYPSRPDVMIFRNFNIFFPSGKTVAVVGGSGSGKSTVVSLIERFYDPNSGQILLDGVEIKTLQLKFLREQIGLVNQEPALFATTILENILYGKPDATMVEVEAAASAANAHSFITLLPKGYDTQVGERGVQLSGGQKQRIAIARAMLKDPKILLLDEATSALDASSESIVQEALDRVMVGRTTVVVAHRLCTIRNVDSIAVIQQGQVVETGTHEELIAKSGAYASLIRFQEMVGTRDFSNPSTRRTRSTRLSHSLSTKSLSLRSGSLRNLSYSYSTGADGRIEMISNAETDRKTRAPENYFYRLLKLNSPEWPYSIMGAVGSILSGFIGPTFAIVMSNMIEVFYYTDYDSMERKTKEYVFIYIGAGLYAVGAYLIQHYFFSIMGENLTTRVRRMMLSAILRNEVGWFDEDEHNSSLIAARLATDAADVKSAIAERISVILQNMTSLLTSFIVAFIVEWRVSLLILGTFPLLVLANFAQQLSLKGFAGDTAKAHAKTSMIAGEGVSNIRTVAAFNAQSKILSLFCHELRVPQKRSLYRSQTSGFLFGLSQLALYGSEALILWYGAHLVSKGVSTFSKVIKVFVVLVITANSVAETVSLAPEIIRGGEAVGSVFSVLDRQTRIDPDDADADPVETIRGDIEFRHVDFAYPSRPDVMVFRDFNLRIRAGHSQALVGASGSGKSSVIAMIERFYDPLAGKVMIDGKDIRRLNLKSLRLKIGLVQQEPALFAATIFDNIAYGKDGATESEVIDAARAANAHGFISGLPEGYKTPVGERGVQLSGGQKQRIAIARAVLKNPTVLLLDEATSALDAESECVLQEALERLMRGRTTVVVAHRLSTIRGVDCIGVIQDGRIVEQGSHSELVSRPEGAYSRLLQLQTHRI.

N-linked (GlcNAc...) asparagine glycosylation occurs at N5. The ABC transmembrane type-1 1 domain occupies 41–330; sequence MFVGSLGAIV…SFSNLGAFSK (290 aa). 2 helical membrane passes run 42–62 and 88–108; these read FVGS…FLLF and LYFV…IACW. D136 is a binding site for ATP. The next 4 membrane-spanning stretches (helical) occupy residues 163 to 183, 187 to 207, 274 to 294, and 308 to 328; these read VGNF…GFVS, LALL…LYAY, CTYG…GVFI, and IFSA…LGAF. 2 residues coordinate brassinolide: Y276 and W283. The ABC transporter 1 domain maps to 365 to 601; that stretch reads IEFKDVTFSY…SGAYASLIRF (237 aa). 7 residues coordinate ATP: Y374, S376, G405, K406, S407, T408, and E529. A glycan (N-linked (GlcNAc...) asparagine) is linked at N641. The ABC transmembrane type-1 2 domain maps to 687 to 975; that stretch reads SIMGAVGSIL…TVSLAPEIIR (289 aa). 2 consecutive transmembrane segments (helical) span residues 688–708 and 732–752; these read IMGA…AIVM and FIYI…HYFF. N758 carries N-linked (GlcNAc...) asparagine glycosylation. D780 contributes to the ATP binding site. Residues N785 and N814 are each glycosylated (N-linked (GlcNAc...) asparagine). The next 3 helical transmembrane spans lie at 822–842, 914–934, and 949–969; these read FIVA…TFPL, GFLF…ILWY, and VIKV…TVSL. Positions 965-1252 are interaction with FKBP42/TWD1; sequence ETVSLAPEII…RLLQLQTHRI (288 aa). Residues 1010–1246 form the ABC transporter 2 domain; sequence IEFRHVDFAY…PEGAYSRLLQ (237 aa). Y1019, S1021, R1022, K1051, S1052, and S1053 together coordinate ATP.

This sequence belongs to the ABC transporter superfamily. ABCB family. Multidrug resistance exporter (TC 3.A.1.201) subfamily. Interacts with 1-naphthylphthalamic acid (NPA), and FKBP42/TWD1. In terms of processing, phosphorylated by PHOT1 in phototropic seedlings, to modulates auxin export and distribution and regulates leaf and petiole curling. As to expression, ubiquitous, mostly in shoot meristems. Present in the majority of stem cells, predominantly in a non-polar manner. Accumulates in seedlings roots and hypocotyls, and in roots apices and inflorescences.

It is found in the cell membrane. It carries out the reaction (indol-3-yl)acetate(in) + ATP + H2O = (indol-3-yl)acetate(out) + ADP + phosphate + H(+). It catalyses the reaction brassinolide(in) + ATP + H2O = brassinolide(out) + ADP + phosphate + H(+). The enzyme catalyses 24-epi-brassinolide(in) + ATP + H2O = 24-epi-brassinolide(out) + ADP + phosphate + H(+). The catalysed reaction is 24-epi-castasterone(in) + ATP + H2O = 24-epi-castasterone(out) + ADP + phosphate + H(+). It carries out the reaction castasterone(in) + ATP + H2O = castasterone(out) + ADP + phosphate + H(+). Its activity is regulated as follows. Transport capacity is stimulated by the chaperone protein FKBP42/TWD1. ATPase activity is specifically activated by bioactive brassinosteroids in a dose-dependent manner, including brassinolide (BL), 24-epiBL and 24-epicastasterone (24-epiCS). Inhibited by vanadate. Functionally, brassinosteroid exporter that, in conjunction with ABCB1, supports the accumulation of exogenous brassinosteroids (BR) in the apoplast, thus promoting BR signaling initiation involving the specific receptor BRI1 and required for plant growth and stress responses. Mediates the transport of castasterone (CSA) and brassinolide (BL) across the plasma membrane. Auxin efflux transporter that acts as a negative regulator of light signaling to promote hypocotyl elongation by mediating leaf tip to petiole auxin flux. Required for the regulation of leaf position and morphology during PHOT1-mediated blue light responses involving auxin distribution, especially in low light fluence. Together with ABCB1 and in a FKBP42/TWD1-dependent manner, supports seed development by promoting stamen elongation and, to a lesser extent, anther dehiscence and pollen maturation, probably as auxin transporters. Contributes to the connective auxin transport (CAT) that ensures communication across the shoot system, including auxin loading at axillary bud apices to influence strigolactone-mediated bud outgrowth responses and shoot branching control. Mediates the accumulation of chlorophyll and anthocyanin, as well as the expression of genes in response to light. Participates in auxin efflux and thus regulates the polar auxin basipetal transport (from auxin-producing leaves to auxin-sensitive tissues, and from root tips to root elongating zone). Involved in diverse auxin-mediated responses including gravitropism, phototropism and lateral root formation. Required for the regulation of organ bending, such as gravitropic root bending. The chain is ABC transporter B family member 19 from Arabidopsis thaliana (Mouse-ear cress).